The sequence spans 523 residues: MNNIHNHKILILDFGSQYTQLIARRVREIGVYCELWAWDVTEQQIREFNPTGIILSGGPESTTEDNSPRAPEYVFNAGVPVLGICYGMQTMAMQLGGLTEPSSHREFGYASVSLENSTALFAQLNDDLNSSLPKLDVWMSHGDKVTRLPEGFQLTGTTSTCPIAAMSDESRHFYGVQFHPEVTHTKSGLALLTNFVVNICGCTTNWTPENIIEDAVARIKAQVGDDEVILGLSGGVDSSVTALLLHRAIGKNLHCVFVDNGLLRLNEGDQVMEMFGDKFGLNIIRVNAEDRFLDALKGIDEPESKRKMIGKVFVDVFDEESHKQTSVKWLAQGTIYPDVIESAASKTGKAHVIKSHHNVGGLPDYMKLGLVEPLRELFKDEVRKIGLALGLPAEMLNRHPFPGPGLGVRVLGEIKKEYCDLLRKADAIFIEELYNSGWYYKVSQAFTVFLPVKSVGVMGDGRKYDWVVSLRAVETIDFMTAHWAHLPYDLLGKISNRIINEVDGISRVVYDVSGKPPATIEWE.

Positions 8–205 constitute a Glutamine amidotransferase type-1 domain; that stretch reads KILILDFGSQ…VVNICGCTTN (198 aa). Residue C85 is the Nucleophile of the active site. Catalysis depends on residues H179 and E181. The GMPS ATP-PPase domain maps to 206–398; the sequence is WTPENIIEDA…LGLPAEMLNR (193 aa). 233–239 provides a ligand contact to ATP; the sequence is SGGVDSS.

Homodimer.

The enzyme catalyses XMP + L-glutamine + ATP + H2O = GMP + L-glutamate + AMP + diphosphate + 2 H(+). The protein operates within purine metabolism; GMP biosynthesis; GMP from XMP (L-Gln route): step 1/1. Its function is as follows. Catalyzes the synthesis of GMP from XMP. In Mannheimia succiniciproducens (strain KCTC 0769BP / MBEL55E), this protein is GMP synthase [glutamine-hydrolyzing].